The following is a 61-amino-acid chain: Large ribosomal subunit protein eL24 (61 aa).

Positions 7, 10, 33, and 37 each coordinate Zn(2+). The C4-type zinc finger occupies 7-37 (CTYCGRSIEPGTGLMYVKNDGSVLWFCSSKC).

The protein belongs to the eukaryotic ribosomal protein eL24 family. In terms of assembly, part of the 50S ribosomal subunit. Forms a cluster with proteins L3 and L14. Zn(2+) is required as a cofactor.

Binds to the 23S rRNA. The protein is Large ribosomal subunit protein eL24 of Hyperthermus butylicus (strain DSM 5456 / JCM 9403 / PLM1-5).